We begin with the raw amino-acid sequence, 261 residues long: Small ribosomal subunit protein eS4 (261 aa).

Positions 42–100 (LPLILILRNRLKYALTYREVVSILMQRHILVDGKIHFCIRLSDVVSIPKTNENFRLLYD) constitute an S4 RNA-binding domain.

This sequence belongs to the eukaryotic ribosomal protein eS4 family.

The protein resides in the cytoplasm. The chain is Small ribosomal subunit protein eS4 (RPS4) from Prunus armeniaca (Apricot).